The primary structure comprises 447 residues: Na(+)-translocating NADH-quinone reductase subunit A (447 aa).

This sequence belongs to the NqrA family. As to quaternary structure, composed of six subunits; NqrA, NqrB, NqrC, NqrD, NqrE and NqrF.

It catalyses the reaction a ubiquinone + n Na(+)(in) + NADH + H(+) = a ubiquinol + n Na(+)(out) + NAD(+). Functionally, NQR complex catalyzes the reduction of ubiquinone-1 to ubiquinol by two successive reactions, coupled with the transport of Na(+) ions from the cytoplasm to the periplasm. NqrA to NqrE are probably involved in the second step, the conversion of ubisemiquinone to ubiquinol. This chain is Na(+)-translocating NADH-quinone reductase subunit A, found in Yersinia pseudotuberculosis serotype O:1b (strain IP 31758).